Consider the following 146-residue polypeptide: Late protein OPG112 (146 aa).

The chain crosses the membrane as a helical span at residues 10–31; the sequence is LAMTAFFGELNTLDIMALIMSI.

This sequence belongs to the orthopoxvirus OPG112 family.

It is found in the host membrane. The protein localises to the host cytoplasm. In terms of biological role, contributes to the formation of crescents and immature virions (IV). Interacts with phosphatidylinositol-3-phosphate (PI3P) and phosphatidylinositol-4-phosphate (PI4P) lipids in order to form virion membranes. Mechanistically, mediates proper formation of OPG125-hexamers, and hence the honey comb lattice and spherical immature virus. The polypeptide is Late protein OPG112 (OPG112) (Cynomys gunnisoni (Gunnison's prairie dog)).